The chain runs to 142 residues: Large ribosomal subunit protein uL22 (142 aa).

A disordered region spans residues 122-142 (RAEAPEETKPSRGTNKEQKAA).

The protein belongs to the universal ribosomal protein uL22 family. In terms of assembly, part of the 50S ribosomal subunit.

Functionally, this protein binds specifically to 23S rRNA; its binding is stimulated by other ribosomal proteins, e.g. L4, L17, and L20. It is important during the early stages of 50S assembly. It makes multiple contacts with different domains of the 23S rRNA in the assembled 50S subunit and ribosome. The globular domain of the protein is located near the polypeptide exit tunnel on the outside of the subunit, while an extended beta-hairpin is found that lines the wall of the exit tunnel in the center of the 70S ribosome. This is Large ribosomal subunit protein uL22 from Gluconobacter oxydans (strain 621H) (Gluconobacter suboxydans).